Reading from the N-terminus, the 432-residue chain is Gamma-glutamyl phosphate reductase (432 aa).

The protein belongs to the gamma-glutamyl phosphate reductase family.

It is found in the cytoplasm. It catalyses the reaction L-glutamate 5-semialdehyde + phosphate + NADP(+) = L-glutamyl 5-phosphate + NADPH + H(+). It functions in the pathway amino-acid biosynthesis; L-proline biosynthesis; L-glutamate 5-semialdehyde from L-glutamate: step 2/2. In terms of biological role, catalyzes the NADPH-dependent reduction of L-glutamate 5-phosphate into L-glutamate 5-semialdehyde and phosphate. The product spontaneously undergoes cyclization to form 1-pyrroline-5-carboxylate. The polypeptide is Gamma-glutamyl phosphate reductase (Ruminiclostridium cellulolyticum (strain ATCC 35319 / DSM 5812 / JCM 6584 / H10) (Clostridium cellulolyticum)).